The chain runs to 431 residues: Trigger factor (431 aa).

The PPIase FKBP-type domain maps to 163-248 (GHFAVIDFTG…LSEIKVKELP (86 aa)).

The protein belongs to the FKBP-type PPIase family. Tig subfamily.

The protein localises to the cytoplasm. The enzyme catalyses [protein]-peptidylproline (omega=180) = [protein]-peptidylproline (omega=0). Functionally, involved in protein export. Acts as a chaperone by maintaining the newly synthesized protein in an open conformation. Functions as a peptidyl-prolyl cis-trans isomerase. This chain is Trigger factor, found in Geobacter sulfurreducens (strain ATCC 51573 / DSM 12127 / PCA).